Here is a 437-residue protein sequence, read N- to C-terminus: Xylose isomerase (437 aa).

Residues His101 and Asp104 contribute to the active site. Mg(2+) contacts are provided by Glu232, Glu268, His271, Asp296, Asp307, Asp309, and Asp339.

The protein belongs to the xylose isomerase family. As to quaternary structure, homotetramer. It depends on Mg(2+) as a cofactor.

The protein localises to the cytoplasm. The catalysed reaction is alpha-D-xylose = alpha-D-xylulofuranose. This chain is Xylose isomerase, found in Mannheimia succiniciproducens (strain KCTC 0769BP / MBEL55E).